A 489-amino-acid polypeptide reads, in one-letter code: Homoserine O-acetyltransferase (489 aa).

One can recognise an AB hydrolase-1 domain in the interval 69-438; sequence LLLCHALSGS…AEGHDGFLLE (370 aa). Serine 163 (nucleophile) is an active-site residue. Positions 255-329 are disordered; it reads ASRHPYPDRL…QTTDSSSLNQ (75 aa). Residues 280–290 are compositionally biased toward basic and acidic residues; it reads EGNRNRRERPC. Residues 299–329 show a composition bias toward low complexity; that stretch reads SESALNSPASSVSSLPSLGASQTTDSSSLNQ. Catalysis depends on residues aspartate 403 and histidine 432.

The protein belongs to the AB hydrolase superfamily. MetX family.

The protein localises to the cytoplasm. It catalyses the reaction L-homoserine + acetyl-CoA = O-acetyl-L-homoserine + CoA. The protein operates within amino-acid biosynthesis; L-methionine biosynthesis via de novo pathway; O-acetyl-L-homoserine from L-homoserine: step 1/1. Its function is as follows. Commits homoserine to the methionine biosynthesis pathway by catalyzing its O-acetylation. In Schizosaccharomyces pombe (strain 972 / ATCC 24843) (Fission yeast), this protein is Homoserine O-acetyltransferase (met6).